The sequence spans 456 residues: Membrane-bound lytic murein transglycosylase F (456 aa).

Residues 1–22 form the signal peptide; that stretch reads MKTWPSRAVSLLLLALALPVGC. The segment at 23–267 is non-LT domain; that stretch reads SEPPPPVRDP…ALDETWFGRF (245 aa). Residues 268 to 456 form an LT domain region; it reads GDYDYVDVAR…YRALLAAQDL (189 aa). Residue Glu-314 is part of the active site.

The protein in the N-terminal section; belongs to the bacterial solute-binding protein 3 family. In the C-terminal section; belongs to the transglycosylase Slt family.

It is found in the cell outer membrane. It catalyses the reaction Exolytic cleavage of the (1-&gt;4)-beta-glycosidic linkage between N-acetylmuramic acid (MurNAc) and N-acetylglucosamine (GlcNAc) residues in peptidoglycan, from either the reducing or the non-reducing ends of the peptidoglycan chains, with concomitant formation of a 1,6-anhydrobond in the MurNAc residue.. In terms of biological role, murein-degrading enzyme that degrades murein glycan strands and insoluble, high-molecular weight murein sacculi, with the concomitant formation of a 1,6-anhydromuramoyl product. Lytic transglycosylases (LTs) play an integral role in the metabolism of the peptidoglycan (PG) sacculus. Their lytic action creates space within the PG sacculus to allow for its expansion as well as for the insertion of various structures such as secretion systems and flagella. The protein is Membrane-bound lytic murein transglycosylase F of Maricaulis maris (strain MCS10) (Caulobacter maris).